Reading from the N-terminus, the 213-residue chain is Penicillin-binding protein activator LpoB (213 aa).

The N-terminal stretch at 1-19 (MMKMNRYALVAALAIFLSG) is a signal peptide. Cys20 is lipidated: N-palmitoyl cysteine. Residue Cys20 is the site of S-diacylglycerol cysteine attachment. The interval 26–71 (PAPVDEVKPAPEQPAEPQQPVPVVPSVPTIPQQPGPIEHEDQTAQP) is disordered. The span at 36 to 50 (PEQPAEPQQPVPVVP) shows a compositional bias: pro residues.

The protein belongs to the LpoB family. In terms of assembly, interacts with PBP1b.

It localises to the cell outer membrane. Its function is as follows. Regulator of peptidoglycan synthesis that is essential for the function of penicillin-binding protein 1B (PBP1b). The chain is Penicillin-binding protein activator LpoB from Citrobacter koseri (strain ATCC BAA-895 / CDC 4225-83 / SGSC4696).